The sequence spans 439 residues: ATP-dependent protease ATPase subunit HslU (439 aa).

ATP is bound by residues I17, 59–64 (GVGKTE), D251, E317, and R389.

This sequence belongs to the ClpX chaperone family. HslU subfamily. In terms of assembly, a double ring-shaped homohexamer of HslV is capped on each side by a ring-shaped HslU homohexamer. The assembly of the HslU/HslV complex is dependent on binding of ATP.

Its subcellular location is the cytoplasm. ATPase subunit of a proteasome-like degradation complex; this subunit has chaperone activity. The binding of ATP and its subsequent hydrolysis by HslU are essential for unfolding of protein substrates subsequently hydrolyzed by HslV. HslU recognizes the N-terminal part of its protein substrates and unfolds these before they are guided to HslV for hydrolysis. This is ATP-dependent protease ATPase subunit HslU from Campylobacter jejuni subsp. doylei (strain ATCC BAA-1458 / RM4099 / 269.97).